The chain runs to 413 residues: MADTPKEGKLTRFLDFTQLIDLASECVGGKVLFATDDFFGPAENLIKSNNPSFKENEYTEFGKWVDGWETRRKRIPGHDWCVIQLGIQGIIRGIDVDISYFSGNYAPRMSIQAANLSEDTVTNIPPRGVKMGAAATSEEFVAITELKSHSWDYLVPMSELKPGDPDSSHNYFFVNSQQRWTHIRLNIFPDGGVARLRVYGTGQRDWAALDSTEPVDLVAIAFGGVCVGFSNAHFGHPNNMIGVGDPKSIADGWETARRLDRPPVLEGNENGFLQVPGCEWAVFRLAHPGVITQIEIDTKYFKGNSPDSCKVDGCILTTLEEEDMIRQKWSLPAHKWKPLLPVTKLTPNQNHLLDSLTLELQDVITHARITIAPDGGVSRLRLKGFPSSICLLRPLREKPMLRFSLKAGFRANL.

This sequence belongs to the allantoicase family.

Its function is as follows. The function of this enzyme is unclear as allantoicase activity is not known to exist in mammals. The polypeptide is Probable inactive allantoicase (Rattus norvegicus (Rat)).